The following is a 219-amino-acid chain: MTEQVQANETETPVAVADERIIRETGIDAKVAGIVEPVINTLGFRLVRVRLSGLNGQTLQIMAERPDGTMTVDDCELVSRTVAPVLDVEDPISGKYHLEISSPGIDRPLVRKSDFSDWAGHIAKVETSIVHEGRKKFRGRIVVGEADSVTIESDQISYGNEPVVRIPFDLISDARLVLTDDLIRDALRKDKALREGRIPGDDLGAEPEDVASTETQEKK.

The segment at 195–219 is disordered; the sequence is EGRIPGDDLGAEPEDVASTETQEKK.

Belongs to the RimP family.

It localises to the cytoplasm. Functionally, required for maturation of 30S ribosomal subunits. The chain is Ribosome maturation factor RimP from Brucella abortus (strain S19).